A 559-amino-acid chain; its full sequence is BTB/POZ domain-containing protein At5g47800 (559 aa).

The BTB domain maps to 28-96 (NDLVIRINNT…CYDITINLSA (69 aa)). Residues 199–476 (DWWTEDISDL…VQALFFDQES (278 aa)) form the NPH3 domain. Y417 is subject to Phosphotyrosine. Residues 477–489 (GSKGASSRSESQE) are compositionally biased toward low complexity. Disordered regions lie at residues 477–502 (GSKG…TDEH) and 524–559 (EGCK…SRDR). Composition is skewed to basic and acidic residues over residues 492–502 (TRGKETPTDEH) and 524–541 (EGCK…DPKK).

The protein belongs to the NPH3 family.

The protein operates within protein modification; protein ubiquitination. May act as a substrate-specific adapter of an E3 ubiquitin-protein ligase complex (CUL3-RBX1-BTB) which mediates the ubiquitination and subsequent proteasomal degradation of target proteins. The sequence is that of BTB/POZ domain-containing protein At5g47800 from Arabidopsis thaliana (Mouse-ear cress).